Reading from the N-terminus, the 102-residue chain is NADH-quinone oxidoreductase subunit K (102 aa).

3 helical membrane-spanning segments follow: residues 6-26 (LIGM…GVLA), 30-50 (ILFQ…AFVA), and 63-83 (MLIL…ALLL).

The protein belongs to the complex I subunit 4L family. NDH-1 is composed of 14 different subunits. Subunits NuoA, H, J, K, L, M, N constitute the membrane sector of the complex.

It localises to the cell inner membrane. The catalysed reaction is a quinone + NADH + 5 H(+)(in) = a quinol + NAD(+) + 4 H(+)(out). Its function is as follows. NDH-1 shuttles electrons from NADH, via FMN and iron-sulfur (Fe-S) centers, to quinones in the respiratory chain. The immediate electron acceptor for the enzyme in this species is believed to be ubiquinone. Couples the redox reaction to proton translocation (for every two electrons transferred, four hydrogen ions are translocated across the cytoplasmic membrane), and thus conserves the redox energy in a proton gradient. This chain is NADH-quinone oxidoreductase subunit K, found in Rhodopseudomonas palustris (strain HaA2).